The primary structure comprises 160 residues: S-ribosylhomocysteine lyase (160 aa).

Fe cation-binding residues include H57, H61, and C127.

The protein belongs to the LuxS family. Homodimer. The cofactor is Fe cation.

The enzyme catalyses S-(5-deoxy-D-ribos-5-yl)-L-homocysteine = (S)-4,5-dihydroxypentane-2,3-dione + L-homocysteine. In terms of biological role, involved in the synthesis of autoinducer 2 (AI-2) which is secreted by bacteria and is used to communicate both the cell density and the metabolic potential of the environment. The regulation of gene expression in response to changes in cell density is called quorum sensing. Catalyzes the transformation of S-ribosylhomocysteine (RHC) to homocysteine (HC) and 4,5-dihydroxy-2,3-pentadione (DPD). The polypeptide is S-ribosylhomocysteine lyase (Streptococcus thermophilus (strain CNRZ 1066)).